A 284-amino-acid chain; its full sequence is Tropomyosin, smooth muscle/fibroblast CTM1 (284 aa).

Positions 1 to 284 (MEAIKKKMTM…DVTLQGIGDL (284 aa)) form a coiled coil. The disordered stretch occupies residues 18–38 (AIDRAEQAETDKKSAEDKATG).

The protein belongs to the tropomyosin family. As to quaternary structure, homodimer. Predominantly expressed in body wall muscle and heart, low in intestine, ovary and larval tail muscle.

The function of tropomyosin in smooth muscle and non-muscle cells is not clear. In Ciona intestinalis (Transparent sea squirt), this protein is Tropomyosin, smooth muscle/fibroblast CTM1 (CTM1).